The primary structure comprises 161 residues: 2-C-methyl-D-erythritol 2,4-cyclodiphosphate synthase (161 aa).

A divalent metal cation contacts are provided by aspartate 11 and histidine 13. 4-CDP-2-C-methyl-D-erythritol 2-phosphate-binding positions include 11-13 (DIH) and 37-38 (HS). Histidine 45 contacts a divalent metal cation. Residues 59–61 (DIG), 135–138 (TTNE), and arginine 145 contribute to the 4-CDP-2-C-methyl-D-erythritol 2-phosphate site.

It belongs to the IspF family. In terms of assembly, homotrimer. A divalent metal cation is required as a cofactor.

The catalysed reaction is 4-CDP-2-C-methyl-D-erythritol 2-phosphate = 2-C-methyl-D-erythritol 2,4-cyclic diphosphate + CMP. The protein operates within isoprenoid biosynthesis; isopentenyl diphosphate biosynthesis via DXP pathway; isopentenyl diphosphate from 1-deoxy-D-xylulose 5-phosphate: step 4/6. Functionally, involved in the biosynthesis of isopentenyl diphosphate (IPP) and dimethylallyl diphosphate (DMAPP), two major building blocks of isoprenoid compounds. Catalyzes the conversion of 4-diphosphocytidyl-2-C-methyl-D-erythritol 2-phosphate (CDP-ME2P) to 2-C-methyl-D-erythritol 2,4-cyclodiphosphate (ME-CPP) with a corresponding release of cytidine 5-monophosphate (CMP). In Thermosynechococcus vestitus (strain NIES-2133 / IAM M-273 / BP-1), this protein is 2-C-methyl-D-erythritol 2,4-cyclodiphosphate synthase.